The sequence spans 327 residues: Tetraacyldisaccharide 4'-kinase (327 aa).

Position 56–63 (56–63) interacts with ATP; it reads FVGGTGKT.

It belongs to the LpxK family.

The catalysed reaction is a lipid A disaccharide + ATP = a lipid IVA + ADP + H(+). It functions in the pathway glycolipid biosynthesis; lipid IV(A) biosynthesis; lipid IV(A) from (3R)-3-hydroxytetradecanoyl-[acyl-carrier-protein] and UDP-N-acetyl-alpha-D-glucosamine: step 6/6. Functionally, transfers the gamma-phosphate of ATP to the 4'-position of a tetraacyldisaccharide 1-phosphate intermediate (termed DS-1-P) to form tetraacyldisaccharide 1,4'-bis-phosphate (lipid IVA). The chain is Tetraacyldisaccharide 4'-kinase from Halorhodospira halophila (strain DSM 244 / SL1) (Ectothiorhodospira halophila (strain DSM 244 / SL1)).